A 237-amino-acid polypeptide reads, in one-letter code: Uridylate kinase (237 aa).

An ATP-binding site is contributed by 12-15 (KLSG). The interval 20–25 (GAEGFG) is involved in allosteric activation by GTP. G54 provides a ligand contact to UMP. ATP is bound by residues G55 and R59. UMP is bound by residues D74 and 135 to 142 (TGSPFFTT). ATP-binding residues include T162, Y168, and D171.

Belongs to the UMP kinase family. Homohexamer.

Its subcellular location is the cytoplasm. The catalysed reaction is UMP + ATP = UDP + ADP. It functions in the pathway pyrimidine metabolism; CTP biosynthesis via de novo pathway; UDP from UMP (UMPK route): step 1/1. Allosterically activated by GTP. Inhibited by UTP. Its function is as follows. Catalyzes the reversible phosphorylation of UMP to UDP. The sequence is that of Uridylate kinase from Actinobacillus succinogenes (strain ATCC 55618 / DSM 22257 / CCUG 43843 / 130Z).